A 45-amino-acid chain; its full sequence is Large ribosomal subunit protein bL36 (45 aa).

Residues 1–45 (MRVSSSIKADPSKGDKLVRRKGRLYVINKKDPNRKQRQAGPARKK) are disordered.

It belongs to the bacterial ribosomal protein bL36 family.

The chain is Large ribosomal subunit protein bL36 from Chlamydia trachomatis serovar L2 (strain ATCC VR-902B / DSM 19102 / 434/Bu).